The primary structure comprises 122 residues: Small ribosomal subunit protein uS13 (122 aa).

The interval 94-122 is disordered; that stretch reads GLPVRGQVTQKNARTRKGPRKTVAGKKGK. Positions 106-122 are enriched in basic residues; the sequence is ARTRKGPRKTVAGKKGK.

Belongs to the universal ribosomal protein uS13 family. As to quaternary structure, part of the 30S ribosomal subunit. Forms a loose heterodimer with protein S19. Forms two bridges to the 50S subunit in the 70S ribosome.

Located at the top of the head of the 30S subunit, it contacts several helices of the 16S rRNA. In the 70S ribosome it contacts the 23S rRNA (bridge B1a) and protein L5 of the 50S subunit (bridge B1b), connecting the 2 subunits; these bridges are implicated in subunit movement. Contacts the tRNAs in the A and P-sites. The polypeptide is Small ribosomal subunit protein uS13 (Mycoplasma mobile (strain ATCC 43663 / 163K / NCTC 11711) (Mesomycoplasma mobile)).